The following is a 386-amino-acid chain: MPNWLLPESIADVLPSEARKIEELRRRMLDLFRTYGYELVMPPMLEYIESLLSGTGHDLDLKTFKLVDQLSGRTIGLRADITPQVARIDAHLLNRAGVTRLCYAGSVLHTRPSGFHVTREPLQIGAEIYGHAGLEADLEIQDLMLAALSAAGLADVRLDLCHVGVLAALLAQAPVAPDVQDELFAALASKDAPALHALTAGLPAAQRDAINLLPSLYGGVDVLARARAQLPQLPAIGRALDDLATLAAHAGGAAVNIDLADLRGYHYHSGVMFAAYVAGVPNAVARGGRYDKVGEAFGRARPATGFSLDLREVAGISPVQARAAAIHAPWSGDAKLREAIAGLRATGEIVIQSLPGHPEDLEEFAYDRQLAEEGGRWVVKPRKASA.

The protein belongs to the class-II aminoacyl-tRNA synthetase family. HisZ subfamily. In terms of assembly, heteromultimer composed of HisG and HisZ subunits.

The protein resides in the cytoplasm. It participates in amino-acid biosynthesis; L-histidine biosynthesis; L-histidine from 5-phospho-alpha-D-ribose 1-diphosphate: step 1/9. Functionally, required for the first step of histidine biosynthesis. May allow the feedback regulation of ATP phosphoribosyltransferase activity by histidine. In Ralstonia nicotianae (strain ATCC BAA-1114 / GMI1000) (Ralstonia solanacearum), this protein is ATP phosphoribosyltransferase regulatory subunit.